The following is a 155-amino-acid chain: Anaerobic ribonucleoside-triphosphate reductase-activating protein (155 aa).

Residues Cys26, Cys30, and Cys33 each coordinate [4Fe-4S] cluster. S-adenosyl-L-methionine contacts are provided by residues 32 to 34 (GCY) and Gly74.

The protein belongs to the organic radical-activating enzymes family. Forms a tetramer composed of two NrdD and two NrdG subunits. The cofactor is [4Fe-4S] cluster.

It localises to the cytoplasm. It carries out the reaction glycyl-[protein] + reduced [flavodoxin] + S-adenosyl-L-methionine = glycin-2-yl radical-[protein] + semiquinone [flavodoxin] + 5'-deoxyadenosine + L-methionine + H(+). Functionally, activation of anaerobic ribonucleoside-triphosphate reductase under anaerobic conditions by generation of an organic free radical, using S-adenosylmethionine and reduced flavodoxin as cosubstrates to produce 5'-deoxy-adenosine. This Haemophilus influenzae (strain ATCC 51907 / DSM 11121 / KW20 / Rd) protein is Anaerobic ribonucleoside-triphosphate reductase-activating protein (nrdG).